Consider the following 444-residue polypeptide: Gentisate transporter (444 aa).

Helical transmembrane passes span A42–V64, L79–S101, A108–A127, W131–A153, A166–V188, W198–I220, W252–W274, A289–G311, R318–V340, Y344–A366, L378–L400, and F410–L428.

It belongs to the major facilitator superfamily. Aromatic acid:H(+) symporter (AAHS) (TC 2.A.1.15) family.

The protein localises to the cell membrane. Functionally, transport of gentisate (2,5-dihydroxybenzoate) into the cell. Does not transport 3-hydroxybenzoate or benzoate. This chain is Gentisate transporter (genK), found in Corynebacterium glutamicum (strain ATCC 13032 / DSM 20300 / JCM 1318 / BCRC 11384 / CCUG 27702 / LMG 3730 / NBRC 12168 / NCIMB 10025 / NRRL B-2784 / 534).